The following is a 342-amino-acid chain: uncharacterized protein (342 aa).

One can recognise a Nudix hydrolase domain in the interval 155-309 (TYGIHINGYV…KPNCALVMVD (155 aa)).

This is an uncharacterized protein from Saccharomyces cerevisiae (strain ATCC 204508 / S288c) (Baker's yeast).